The sequence spans 541 residues: Putative ammonium transporter sll0537 (541 aa).

Helical transmembrane passes span 6-26 (TLWLLLCAGLVFFMQAGFMCL), 44-64 (FADFGISVALFWSFGFSIMFG), 86-106 (LAVFFLFQAMFCGTATTIISG), 117-137 (YLLVAGLASGLIYPLFGDWAW), 161-181 (FAGSTVVHSVGAWIGLATILV), 203-223 (MPFSVLGTLILWFGWLGFNGG), 235-255 (IMVNTVLAGVGGMLMAGLISL), 260-280 (MIQVEPLMNGSLAGLVAITAS), 283-303 (VVMTPIAMVIGATGSAIAYLV), 316-336 (VDAVAVHGGAGVWGTLCVGLF), and 356-376 (LLGIGVCTLWAFGLAWVFLTL).

Belongs to the ammonia transporter channel (TC 1.A.11.2) family.

The protein localises to the cell membrane. The sequence is that of Putative ammonium transporter sll0537 from Synechocystis sp. (strain ATCC 27184 / PCC 6803 / Kazusa).